We begin with the raw amino-acid sequence, 264 residues long: Thymidylate synthase (264 aa).

A dUMP-binding site is contributed by Arg21. Position 51 (His51) interacts with (6R)-5,10-methylene-5,6,7,8-tetrahydrofolate. Residue 126 to 127 participates in dUMP binding; that stretch reads RR. The Nucleophile role is filled by Cys146. DUMP-binding positions include 166–169, Asn177, and 207–209; these read RSCD and HLY. Asp169 is a binding site for (6R)-5,10-methylene-5,6,7,8-tetrahydrofolate. Residue Ala263 coordinates (6R)-5,10-methylene-5,6,7,8-tetrahydrofolate.

This sequence belongs to the thymidylate synthase family. Bacterial-type ThyA subfamily. In terms of assembly, homodimer.

The protein resides in the cytoplasm. The catalysed reaction is dUMP + (6R)-5,10-methylene-5,6,7,8-tetrahydrofolate = 7,8-dihydrofolate + dTMP. Its pathway is pyrimidine metabolism; dTTP biosynthesis. Functionally, catalyzes the reductive methylation of 2'-deoxyuridine-5'-monophosphate (dUMP) to 2'-deoxythymidine-5'-monophosphate (dTMP) while utilizing 5,10-methylenetetrahydrofolate (mTHF) as the methyl donor and reductant in the reaction, yielding dihydrofolate (DHF) as a by-product. This enzymatic reaction provides an intracellular de novo source of dTMP, an essential precursor for DNA biosynthesis. The polypeptide is Thymidylate synthase (Shewanella sp. (strain MR-4)).